The sequence spans 285 residues: Polyamine aminopropyltransferase (285 aa).

Residues 5–241 (DNWYIEHFQP…GWWSVTMASK (237 aa)) enclose the PABS domain. Glutamine 35 contacts S-methyl-5'-thioadenosine. Positions 66 and 90 each coordinate spermidine. S-methyl-5'-thioadenosine is bound by residues aspartate 110 and 141–142 (DG). Aspartate 160 serves as the catalytic Proton acceptor. 160–163 (DSTD) provides a ligand contact to spermidine. Residue proline 167 participates in S-methyl-5'-thioadenosine binding.

The protein belongs to the spermidine/spermine synthase family. As to quaternary structure, homodimer or homotetramer.

It localises to the cytoplasm. The enzyme catalyses S-adenosyl 3-(methylsulfanyl)propylamine + putrescine = S-methyl-5'-thioadenosine + spermidine + H(+). It functions in the pathway amine and polyamine biosynthesis; spermidine biosynthesis; spermidine from putrescine: step 1/1. Its function is as follows. Catalyzes the irreversible transfer of a propylamine group from the amino donor S-adenosylmethioninamine (decarboxy-AdoMet) to putrescine (1,4-diaminobutane) to yield spermidine. The sequence is that of Polyamine aminopropyltransferase from Xanthomonas campestris pv. campestris (strain 8004).